The following is a 215-amino-acid chain: Adenylate kinase (215 aa).

10–15 (GAGKGT) contacts ATP. The interval 30–59 (STGDMFRAAMKNNTELGKKAKSFMDNGDLV) is NMP. Residues T31, R36, 57 to 59 (DLV), 85 to 88 (GFPR), and Q92 contribute to the AMP site. The tract at residues 126-163 (GRWICRTCGKTYHEIYNPPKVPGKCDLDGGELYQREDD) is LID. R127 lines the ATP pocket. Zn(2+) contacts are provided by C130 and C133. 136–137 (TY) lines the ATP pocket. Zn(2+) contacts are provided by C150 and D153. R160 and R171 together coordinate AMP. Residue Q199 coordinates ATP.

The protein belongs to the adenylate kinase family. In terms of assembly, monomer.

Its subcellular location is the cytoplasm. The catalysed reaction is AMP + ATP = 2 ADP. It functions in the pathway purine metabolism; AMP biosynthesis via salvage pathway; AMP from ADP: step 1/1. Functionally, catalyzes the reversible transfer of the terminal phosphate group between ATP and AMP. Plays an important role in cellular energy homeostasis and in adenine nucleotide metabolism. This Listeria innocua serovar 6a (strain ATCC BAA-680 / CLIP 11262) protein is Adenylate kinase.